The chain runs to 84 residues: Tetrahydromethanopterin S-methyltransferase subunit G (84 aa).

A helical membrane pass occupies residues 50–70 (IGILYGLVIGIILSYILPALI).

Belongs to the MtrG family. The complex is composed of 8 subunits; MtrA, MtrB, MtrC, MtrD, MtrE, MtrF, MtrG and MtrH.

The protein resides in the cell membrane. It catalyses the reaction 5-methyl-5,6,7,8-tetrahydromethanopterin + coenzyme M + 2 Na(+)(in) = 5,6,7,8-tetrahydromethanopterin + methyl-coenzyme M + 2 Na(+)(out). The protein operates within one-carbon metabolism; methanogenesis from CO(2); methyl-coenzyme M from 5,10-methylene-5,6,7,8-tetrahydromethanopterin: step 2/2. Functionally, part of a complex that catalyzes the formation of methyl-coenzyme M and tetrahydromethanopterin from coenzyme M and methyl-tetrahydromethanopterin. This is an energy-conserving, sodium-ion translocating step. The chain is Tetrahydromethanopterin S-methyltransferase subunit G from Methanocaldococcus jannaschii (strain ATCC 43067 / DSM 2661 / JAL-1 / JCM 10045 / NBRC 100440) (Methanococcus jannaschii).